The primary structure comprises 328 residues: 3-ketodihydrosphingosine reductase TSC10 (328 aa).

Leucine 16 lines the NADP(+) pocket. Positions 19, 21, and 23 each coordinate NADPH. The GXSXG signature appears at 19–23; it reads GASQG. Leucine 24 serves as a coordination point for NADP(+). Residues arginine 44, lysine 48, and aspartate 73 each coordinate NADPH. Aspartate 73 is a binding site for NADP(+). Serine 161 acts as the Proton donor in catalysis. NADP(+)-binding residues include tyrosine 175, lysine 179, and serine 210. Tyrosine 175 serves as the catalytic Proton acceptor. The active-site Lowers pKa of active site Tyr is lysine 179. A helical transmembrane segment spans residues 277 to 297; it reads FFQVIVSFIFSIIAPIANYVV.

This sequence belongs to the short-chain dehydrogenases/reductases (SDR) family.

It is found in the endoplasmic reticulum membrane. It catalyses the reaction sphinganine + NADP(+) = 3-oxosphinganine + NADPH + H(+). Its pathway is lipid metabolism; sphingolipid metabolism. Its function is as follows. Catalyzes the reduction of 3'-oxosphinganine (3-ketodihydrosphingosine/KDS) to sphinganine (dihydrosphingosine/DHS), the second step of de novo sphingolipid biosynthesis. The protein is 3-ketodihydrosphingosine reductase TSC10 (TSC10) of Debaryomyces hansenii (strain ATCC 36239 / CBS 767 / BCRC 21394 / JCM 1990 / NBRC 0083 / IGC 2968) (Yeast).